The sequence spans 379 residues: 1-deoxy-D-xylulose 5-phosphate reductoisomerase (379 aa).

NADPH contacts are provided by T10, G11, S12, I13, N39, and N121. K122 contacts 1-deoxy-D-xylulose 5-phosphate. E123 contacts NADPH. Position 147 (D147) interacts with Mn(2+). The 1-deoxy-D-xylulose 5-phosphate site is built by S148, E149, S173, and H196. E149 contacts Mn(2+). G202 is an NADPH binding site. 1-deoxy-D-xylulose 5-phosphate is bound by residues S209, N214, K215, and E218. E218 provides a ligand contact to Mn(2+).

Belongs to the DXR family. Mg(2+) serves as cofactor. Mn(2+) is required as a cofactor.

It carries out the reaction 2-C-methyl-D-erythritol 4-phosphate + NADP(+) = 1-deoxy-D-xylulose 5-phosphate + NADPH + H(+). It participates in isoprenoid biosynthesis; isopentenyl diphosphate biosynthesis via DXP pathway; isopentenyl diphosphate from 1-deoxy-D-xylulose 5-phosphate: step 1/6. Its function is as follows. Catalyzes the NADPH-dependent rearrangement and reduction of 1-deoxy-D-xylulose-5-phosphate (DXP) to 2-C-methyl-D-erythritol 4-phosphate (MEP). This chain is 1-deoxy-D-xylulose 5-phosphate reductoisomerase, found in Chlamydia pneumoniae (Chlamydophila pneumoniae).